Reading from the N-terminus, the 1012-residue chain is PHD finger protein 20 (1012 aa).

2 Tudor domains span residues 4–69 and 83–147; these read HPPN…RPLE and GSSE…GNAR. The segment at 142–336 is disordered; it reads IVGNARPKET…RSSRLSTNGT (195 aa). The segment covering 147-245 has biased composition (basic and acidic residues); the sequence is RPKETDHKSL…QVDKKPENDI (99 aa). Ser159 carries the phosphoserine modification. A DNA-binding region (a.T hook) is located at residues 257–269; sequence KRKRGRPPSIAPT. Positions 271-280 are enriched in polar residues; sequence VDSNSQTLQP. Basic and acidic residues predominate over residues 297–325; the sequence is PLKRPRLDKNSSQEKSKNYSENTDKDLSR. The C2H2-type zinc finger occupies 452-477; sequence FRCKVVDCLKFFRKAKLLHYHMKYFH. The span at 481–490 shows a compositional bias: basic and acidic residues; sequence KSLEPEESPG. The tract at residues 481 to 611 is disordered; that stretch reads KSLEPEESPG…KGKVKALEED (131 aa). Residue Ser488 is modified to Phosphoserine. Residues 497–509 are compositionally biased toward polar residues; the sequence is RGPSASDKPSQET. Residues 522–538 show a composition bias toward basic and acidic residues; sequence TKDKEKNKEKKFKEFVR. The segment covering 539 to 551 has biased composition (basic residues); it reads VKPKKKKKKKKKT. Residues 654–700 form a PHD-type zinc finger; it reads RCICEVQEENDFMIQCEECQCWQHGVCMGLLEENVPEKYTCYVCQDP. Lys843 is modified (N6-acetyllysine). The tract at residues 866–912 is disordered; it reads DAVNPLHENGDDSLSPRLGWPLDQDRSKGDSDPKPGSPKVKEYVSKK. Phosphoserine occurs at positions 878 and 880. The span at 888–912 shows a compositional bias: basic and acidic residues; it reads DQDRSKGDSDPKPGSPKVKEYVSKK.

In terms of assembly, homodimer; disulfide-linked. Component of some MLL1/MLL complex, at least composed of the core components KMT2A/MLL1, ASH2L, HCFC1, WDR5 and RBBP5, as well as the facultative components BACC1, CHD8, E2F6, HSP70, INO80C, KANSL1, LAS1L, MAX, MCRS1, MGA, KAT8/MOF, PELP1, PHF20, PRP31, RING2, RUVB1/TIP49A, RUVB2/TIP49B, SENP3, TAF1, TAF4, TAF6, TAF7, TAF9 and TEX10. Component of the NSL complex at least composed of MOF/KAT8, KANSL1, KANSL2, KANSL3, MCRS1, PHF20, OGT1/OGT, WDR5 and HCFC1. In terms of processing, ubiquitinated by TRIM26; leading to proteasomal degradation. As to expression, expressed in heart, kidney, liver, lung, pancreas, placenta, spleen and testis. Not expressed in brain, skeletal muscle, colon, ovary, prostate, small intestine and thymus. Expressed in colon and ovary cancer cell lines while it is not expressed in the respective normal tissues.

It is found in the nucleus. Functionally, methyllysine-binding protein, component of the MOF histone acetyltransferase protein complex. Not required for maintaining the global histone H4 'Lys-16' acetylation (H4K16ac) levels or locus specific histone acetylation, but instead works downstream in transcriptional regulation of MOF target genes. As part of the NSL complex it may be involved in acetylation of nucleosomal histone H4 on several lysine residues. Contributes to methyllysine-dependent p53/TP53 stabilization and up-regulation after DNA damage. The polypeptide is PHD finger protein 20 (PHF20) (Homo sapiens (Human)).